We begin with the raw amino-acid sequence, 255 residues long: DNA repair protein RecO (255 aa).

The protein belongs to the RecO family.

Involved in DNA repair and RecF pathway recombination. The polypeptide is DNA repair protein RecO (Listeria welshimeri serovar 6b (strain ATCC 35897 / DSM 20650 / CCUG 15529 / CIP 8149 / NCTC 11857 / SLCC 5334 / V8)).